Here is a 551-residue protein sequence, read N- to C-terminus: Eukaryotic translation initiation factor 3 subunit D-2 (551 aa).

Residues 105–152 (NNVRARGRTGRGSQAVGGPGGPAAGGSTANSTKYGKGRNTRNTQNVGR) are disordered. Residues 119–128 (AVGGPGGPAA) show a composition bias toward gly residues. The tract at residues 290–304 (QFDLLTVNETSLEPP) is RNA gate.

Belongs to the eIF-3 subunit D family. Component of the eukaryotic translation initiation factor 3 (eIF-3) complex. The eIF-3 complex interacts with pix.

Its subcellular location is the cytoplasm. MRNA cap-binding component of the eukaryotic translation initiation factor 3 (eIF-3) complex, which is involved in protein synthesis of a specialized repertoire of mRNAs and, together with other initiation factors, stimulates binding of mRNA and methionyl-tRNAi to the 40S ribosome. The eIF-3 complex specifically targets and initiates translation of a subset of mRNAs involved in cell proliferation. In the eIF-3 complex, eif3d specifically recognizes and binds the 7-methylguanosine cap of a subset of mRNAs. The sequence is that of Eukaryotic translation initiation factor 3 subunit D-2 from Drosophila erecta (Fruit fly).